Reading from the N-terminus, the 318-residue chain is MADKVQTTLLFLAVGEFSVGILGNAFIGLVNCMDWVKKRKIASIDLILTSLAISRICLLCIILLDCFTLVLYPDVYATGKEMRIIDFFWTLTNHLSIWFATCLSIYYFFKIGNFFHPLFLWMKWRIDRVISWILLGCVVLSVFISLPATENLNADFRFCVKAKRKTNLTWSCRVNKTQHASTKLFLNLATLLPFCVCLMSFFLLILSLRRHIRRMQLSATGCRDPSTEAHVRALKAVISFLLLFIAYYLSFLIATSSYFMPETELAVIFGESIALIYPSSHSFILILGNNKLRYVSLKVIWKVMSILKGRKFQQHKQI.

The Extracellular segment spans residues 1–9 (MADKVQTTL). The helical transmembrane segment at 10 to 30 (LFLAVGEFSVGILGNAFIGLV) threads the bilayer. Residues 31–55 (NCMDWVKKRKIASIDLILTSLAISR) lie on the Cytoplasmic side of the membrane. The chain crosses the membrane as a helical span at residues 56-76 (ICLLCIILLDCFTLVLYPDVY). Residues 77-94 (ATGKEMRIIDFFWTLTNH) are Extracellular-facing. The helical transmembrane segment at 95–115 (LSIWFATCLSIYYFFKIGNFF) threads the bilayer. Residues 116-128 (HPLFLWMKWRIDR) lie on the Cytoplasmic side of the membrane. The helical transmembrane segment at 129–149 (VISWILLGCVVLSVFISLPAT) threads the bilayer. Over 150-187 (ENLNADFRFCVKAKRKTNLTWSCRVNKTQHASTKLFLN) the chain is Extracellular. Asn167 and Asn175 each carry an N-linked (GlcNAc...) asparagine glycan. Residues 188 to 208 (LATLLPFCVCLMSFFLLILSL) traverse the membrane as a helical segment. At 209 to 235 (RRHIRRMQLSATGCRDPSTEAHVRALK) the chain is on the cytoplasmic side. Residues 236-256 (AVISFLLLFIAYYLSFLIATS) form a helical membrane-spanning segment. Residues 257–266 (SYFMPETELA) lie on the Extracellular side of the membrane. Residues 267–287 (VIFGESIALIYPSSHSFILIL) traverse the membrane as a helical segment. At 288-318 (GNNKLRYVSLKVIWKVMSILKGRKFQQHKQI) the chain is on the cytoplasmic side.

The protein belongs to the G-protein coupled receptor T2R family.

It localises to the membrane. Gustducin-coupled receptor implicated in the perception of bitter compounds in the oral cavity and the gastrointestinal tract. Signals through PLCB2 and the calcium-regulated cation channel TRPM5. This chain is Taste receptor type 2 member 7 (TAS2R7), found in Gorilla gorilla gorilla (Western lowland gorilla).